Reading from the N-terminus, the 968-residue chain is Isoleucine--tRNA ligase (968 aa).

The 'HIGH' region signature appears at 68 to 78 (PYANGALHMGH). Glu582 is a binding site for L-isoleucyl-5'-AMP. The 'KMSKS' region motif lies at 623-627 (KMSKS). Lys626 lines the ATP pocket. Zn(2+)-binding residues include Cys936, Cys939, Cys956, and Cys959.

Belongs to the class-I aminoacyl-tRNA synthetase family. IleS type 1 subfamily. Monomer. Zn(2+) serves as cofactor.

It is found in the cytoplasm. It catalyses the reaction tRNA(Ile) + L-isoleucine + ATP = L-isoleucyl-tRNA(Ile) + AMP + diphosphate. Functionally, catalyzes the attachment of isoleucine to tRNA(Ile). As IleRS can inadvertently accommodate and process structurally similar amino acids such as valine, to avoid such errors it has two additional distinct tRNA(Ile)-dependent editing activities. One activity is designated as 'pretransfer' editing and involves the hydrolysis of activated Val-AMP. The other activity is designated 'posttransfer' editing and involves deacylation of mischarged Val-tRNA(Ile). The protein is Isoleucine--tRNA ligase of Prochlorococcus marinus (strain AS9601).